The primary structure comprises 398 residues: Arylacetamide deacetylase (398 aa).

At 1 to 5 the chain is on the cytoplasmic side; it reads MGRTI. Residues 6 to 26 traverse the membrane as a helical; Signal-anchor for type II membrane protein segment; it reads FLLISVVLVAYYIYIPLPDDI. The Lumenal portion of the chain corresponds to 27 to 398; that stretch reads EEPWKIILGN…QYLNWLHKNL (372 aa). An N-linked (GlcNAc...) asparagine glycan is attached at Asn-77. Residues 110 to 112 carry the Involved in the stabilization of the negatively charged intermediate by the formation of the oxyanion hole motif; it reads HGG. Residues Cys-115 and Cys-339 are joined by a disulfide bond. Ser-188 is an active-site residue. 3 N-linked (GlcNAc...) asparagine glycosylation sites follow: Asn-192, Asn-281, and Asn-324. Catalysis depends on residues Asp-342 and His-372.

This sequence belongs to the 'GDXG' lipolytic enzyme family. In terms of tissue distribution, highest levels in liver with lower levels in jejunum, kidney and testis.

It localises to the endoplasmic reticulum membrane. It is found in the microsome membrane. It catalyses the reaction a triacylglycerol + H2O = a diacylglycerol + a fatty acid + H(+). In terms of biological role, displays cellular triglyceride lipase activity in liver, increases the levels of intracellular fatty acids derived from the hydrolysis of newly formed triglyceride stores and plays a role in very low-density lipoprotein assembly. Displays serine esterase activity in liver. Deacetylates a variety of arylacetamide substrates, including xenobiotic compounds and procarcinogens, converting them to the primary arylamide compounds and increasing their toxicity. The chain is Arylacetamide deacetylase (Aadac) from Rattus norvegicus (Rat).